Here is a 100-residue protein sequence, read N- to C-terminus: ESAT-6-like protein EsxT (100 aa).

This sequence belongs to the WXG100 family. ESAT-6 subfamily. As to quaternary structure, forms a tight 1:1 complex with EsxU.

The protein resides in the secreted. The chain is ESAT-6-like protein EsxT from Mycobacterium tuberculosis (strain CDC 1551 / Oshkosh).